Consider the following 529-residue polypeptide: Berberine bridge enzyme-like 7 (529 aa).

The signal sequence occupies residues 1-19 (MKEALSILCLALLVSVSEA). Cys32 and Cys95 are oxidised to a cystine. Residue Asn52 is glycosylated (N-linked (GlcNAc...) asparagine). Residues 69–247 (YSSPNFKKLL…LSWKINLVKV (179 aa)) form the FAD-binding PCMH-type domain. Positions 110–172 (HDLEGLSYRS…QTLAFPAGVC (63 aa)) form a cross-link, 6-(S-cysteinyl)-8alpha-(pros-histidyl)-FAD (His-Cys). N-linked (GlcNAc...) asparagine glycans are attached at residues Asn257, Asn341, and Asn439.

The protein belongs to the oxygen-dependent FAD-linked oxidoreductase family. FAD is required as a cofactor. The FAD cofactor is bound via a bicovalent 6-S-cysteinyl, 8alpha-N1-histidyl FAD linkage.

Its subcellular location is the secreted. The protein resides in the cell wall. Probable flavin-dependent oxidoreductase. The protein is Berberine bridge enzyme-like 7 of Arabidopsis thaliana (Mouse-ear cress).